A 246-amino-acid polypeptide reads, in one-letter code: MTQTFADQKRKTVETAEFTEDGRYKRKVRSFVLRTGRLSEFQKNMMNDNWGTLGLDYQTEPFDFAKIYGNDNPVVLEIGFGMGKSLVDMAFANPDKNYLGIEVHTPGVGACIAYAVEKGGTNLRVICHDATEILRDSIADGALGGLQLFFPDPWHKAKHHKRRIVQPHFVAQVVQKLAGNGFIHMATDWENYAEQMLEVLSANTDLVNTSKNGDYIPRPDFRPLTKFEARGHRLGHGVWDLYFVKK.

Residues E77, E102, D129, and D152 each contribute to the S-adenosyl-L-methionine site. D152 is a catalytic residue. Substrate is bound by residues K156, D188, and 225–228 (TKFE).

The protein belongs to the class I-like SAM-binding methyltransferase superfamily. TrmB family.

The catalysed reaction is guanosine(46) in tRNA + S-adenosyl-L-methionine = N(7)-methylguanosine(46) in tRNA + S-adenosyl-L-homocysteine. Its pathway is tRNA modification; N(7)-methylguanine-tRNA biosynthesis. Catalyzes the formation of N(7)-methylguanine at position 46 (m7G46) in tRNA. The polypeptide is tRNA (guanine-N(7)-)-methyltransferase (Haemophilus influenzae (strain PittEE)).